Reading from the N-terminus, the 465-residue chain is Ribulose bisphosphate carboxylase large chain (465 aa).

Residue lysine 4 is modified to N6,N6,N6-trimethyllysine. Substrate is bound by residues asparagine 113 and threonine 163. Catalysis depends on lysine 165, which acts as the Proton acceptor. Residue lysine 167 coordinates substrate. The Mg(2+) site is built by lysine 191, aspartate 193, and glutamate 194. Position 191 is an N6-carboxylysine (lysine 191). The Proton acceptor role is filled by histidine 284. The substrate site is built by arginine 285, histidine 317, and serine 369.

Belongs to the RuBisCO large chain family. Type I subfamily. In terms of assembly, heterohexadecamer of 8 large chains and 8 small chains; disulfide-linked. The disulfide link is formed within the large subunit homodimers. It depends on Mg(2+) as a cofactor. The disulfide bond which can form in the large chain dimeric partners within the hexadecamer appears to be associated with oxidative stress and protein turnover.

The protein localises to the plastid. The protein resides in the chloroplast. It carries out the reaction 2 (2R)-3-phosphoglycerate + 2 H(+) = D-ribulose 1,5-bisphosphate + CO2 + H2O. It catalyses the reaction D-ribulose 1,5-bisphosphate + O2 = 2-phosphoglycolate + (2R)-3-phosphoglycerate + 2 H(+). Its function is as follows. RuBisCO catalyzes two reactions: the carboxylation of D-ribulose 1,5-bisphosphate, the primary event in carbon dioxide fixation, as well as the oxidative fragmentation of the pentose substrate in the photorespiration process. Both reactions occur simultaneously and in competition at the same active site. This is Ribulose bisphosphate carboxylase large chain from Morus rubra (Red mulberry).